We begin with the raw amino-acid sequence, 185 residues long: MISVNDFKTGLTISVDNAIWKVIDFQHVKPGKGSAFVRSKLRNLRTGAIQEKTFRAGEKVEPAMIENRRMQYLYADGDNHVFMDNESFEQTELSSDYLKEELNYLKEGMEVQIQTYEGETIGVELPKTVELTVTETEPGIKGDTATGATKSATVETGYTLNVPLFVNEGDVLIINTGDGSYISRG.

Belongs to the elongation factor P family.

Its subcellular location is the cytoplasm. It participates in protein biosynthesis; polypeptide chain elongation. Involved in peptide bond synthesis. Stimulates efficient translation and peptide-bond synthesis on native or reconstituted 70S ribosomes in vitro. Probably functions indirectly by altering the affinity of the ribosome for aminoacyl-tRNA, thus increasing their reactivity as acceptors for peptidyl transferase. The polypeptide is Elongation factor P (Staphylococcus aureus (strain Mu3 / ATCC 700698)).